The following is a 918-amino-acid chain: uncharacterized protein (918 aa).

Disordered stretches follow at residues 66–150, 226–283, 326–481, 515–548, 594–707, 737–774, and 800–918; these read AMVH…SSYG, GADG…NADF, ADGT…EFGN, ALEK…GSNL, EITH…NAVK, NHSN…SHLT, and HITH…IIQM. The segment covering 79 to 89 has biased composition (low complexity); it reads QSSGSSSNTHS. The span at 103 to 127 shows a compositional bias: basic and acidic residues; sequence NSEKKDGYNKESKVDEANENTKIKS. Residues 270–281 show a composition bias toward low complexity; the sequence is SKKAASASGSNA. Composition is skewed to polar residues over residues 326–354, 363–372, and 379–404; these read ADGT…SSDL, KSHSTSNKTD, and ANQS…SSIE. Residues 430-441 are compositionally biased toward low complexity; sequence SSSHSKSASGTS. Residues 515–533 are compositionally biased toward basic and acidic residues; the sequence is ALEKNHEKNSDGTFKDESK. 2 stretches are compositionally biased toward polar residues: residues 534-545 and 604-619; these read GSNSRVNRTDGG and VAAS…TSMS. Residues 632 to 647 are compositionally biased toward low complexity; the sequence is SSQAADSHDAISASSD. A compositionally biased stretch (basic and acidic residues) spans 648-660; sequence VDAKIVKHADRSE. Over residues 661–672 the composition is skewed to polar residues; sequence SISNDSSNQTAS. Residues 673–688 show a composition bias toward basic and acidic residues; it reads EHNDSSKQSEHEKRQN. The span at 689 to 702 shows a compositional bias: polar residues; sequence ADGSFSDVSSNSAK. Basic and acidic residues-rich tracts occupy residues 738–765, 800–814, 830–846, and 883–918; these read HSND…DAKH, HITH…DAGH, EGFK…EGAQ, and LAKD…IIQM.

This is an uncharacterized protein from Caenorhabditis elegans.